A 455-amino-acid chain; its full sequence is Argininosuccinate lyase (455 aa).

This sequence belongs to the lyase 1 family. Argininosuccinate lyase subfamily.

Its subcellular location is the cytoplasm. The enzyme catalyses 2-(N(omega)-L-arginino)succinate = fumarate + L-arginine. It participates in amino-acid biosynthesis; L-arginine biosynthesis; L-arginine from L-ornithine and carbamoyl phosphate: step 3/3. The chain is Argininosuccinate lyase from Shewanella sp. (strain MR-4).